Reading from the N-terminus, the 366-residue chain is Latent membrane protein 1 (366 aa).

Residues 1–23 (MERDLERGPPGPPRPPLGPPLSS) lie on the Cytoplasmic side of the membrane. The helical transmembrane segment at 24–44 (SIGLALLLLLLALLFWLYIVL) threads the bilayer. Residues 45-51 (SNWTGGA) lie on the Extracellular side of the membrane. The helical transmembrane segment at 52–72 (LLVLYSFALMLIIIILIIFIF) threads the bilayer. At 73–75 (RRD) the chain is on the cytoplasmic side. A helical transmembrane segment spans residues 76–96 (LLCPLGGLGLLLLMVTLLLIA). Topologically, residues 97–106 (LWNLHGQALY) are extracellular. The helical transmembrane segment at 107-127 (LGIVLFIFGCLLVLGLWIYFL) threads the bilayer. Topologically, residues 128 to 139 (EILWRLGATIWQ) are cytoplasmic. The helical transmembrane segment at 140 to 160 (LLAFILAFFLAIILLIIALYL) threads the bilayer. Topologically, residues 161–163 (QQN) are extracellular. A helical transmembrane segment spans residues 164–184 (WWTLLVDLLWLLLFMAILIWM). The Cytoplasmic portion of the chain corresponds to 185-366 (YFHGPRHTDE…HGPVQLSYYD (182 aa)). A CTAR1 region spans residues 194 to 232 (EHHHDDSLPHPQQATDDSSHESDSNSNEGRHHLLVSGAG). The segment at 194 to 366 (EHHHDDSLPH…HGPVQLSYYD (173 aa)) is disordered. An Interaction with host TRAF proteins motif is present at residues 204–208 (PQQAT). A compositionally biased stretch (basic and acidic residues) spans 210–224 (DSSHESDSNSNEGRH). Low complexity-rich tracts occupy residues 251-267 (NGPQ…PQDP) and 337-346 (PHLPTLLLGT). Residues 332 to 366 (GGGGDPHLPTLLLGTSGSGGDDDDPHGPVQLSYYD) are CTAR2.

This sequence belongs to the herpesviridae LMP-1 family. As to quaternary structure, interacts (via PXQXT motif) with host tumor necrosis factor receptor-associated factor (TRAF) proteins TRAF1, TRAF2, TRAF3 and TRAF5. Interacts with human protein ZMYND11; leading to negatively regulate NF-kappa-B activation. Interacts with host UBE2I; this interaction induces the sumoylation of various cellular proteins. Interacts with host IRF7. Ubiquitinated on the N-terminus.

Its subcellular location is the host cell membrane. Acts as a CD40 functional homolog to prevent apoptosis of infected B-lymphocytes and drive their proliferation. Functions as a constitutively active tumor necrosis factor receptor that induces the activation of several signaling pathways, including those of the NF-kappa-B family. LMP1 signaling leads to up-regulation of antiapoptotic proteins and provide growth signals in latently infected cells. Interacts with host UBE2I and subsequently affects the sumoylation state of several cellular proteins. For example, induces the sumoylation of host IRF7 thereby limiting its transcriptional activity and modulating the activation of innate immune responses. Also inhibits host IFN-alpha-stimulated STAT2 nuclear translocation and interferon-stimulated response element transcriptional activity by interacting with and inhibiting host TYK2. Induces SUMO expression during viral latency thereby dysregulating the host sumoylation processes. The sequence is that of Latent membrane protein 1 (LMP1) from Homo sapiens (Human).